The chain runs to 113 residues: Ubiquinol-cytochrome-c reductase complex assembly factor 4 (113 aa).

A signal peptide spans 1 to 18; the sequence is MWGSLCKAPLLRLRPTFA. Topologically, residues 19-72 are mitochondrial matrix; the sequence is AVSNVKTIHIKASPDYNEGIDKSKPLKFSTSKASHRHWTVAKSLGSNQQRPWWK. The helical transmembrane segment at 73-89 threads the bilayer; sequence VVPLSVFLTTVLLWAIF. Over 90–113 the chain is Mitochondrial intermembrane; the sequence is RKETDIDEAIYKPIEQLQDESENK.

It belongs to the UQCC4 family.

The protein localises to the mitochondrion inner membrane. Its function is as follows. Required for the assembly and stability of the mitochondrial ubiquinol-cytochrome c reductase complex (complex III (CIII) or cytochrome b-c1 complex), a multisubunit transmembrane complex that is part of the mitochondrial electron transport chain (ETC) which drives oxidative phosphorylation. The polypeptide is Ubiquinol-cytochrome-c reductase complex assembly factor 4 (uqcc4) (Xenopus tropicalis (Western clawed frog)).